Consider the following 1058-residue polypeptide: Isoleucine--tRNA ligase (1058 aa).

The short motif at Pro48–Thr58 is the 'HIGH' region element. The 'KMSKS' region signature appears at Lys596 to Ser600. Lys599 contacts ATP.

The protein belongs to the class-I aminoacyl-tRNA synthetase family. IleS type 2 subfamily. Monomer. Zn(2+) is required as a cofactor.

It is found in the cytoplasm. It carries out the reaction tRNA(Ile) + L-isoleucine + ATP = L-isoleucyl-tRNA(Ile) + AMP + diphosphate. In terms of biological role, catalyzes the attachment of isoleucine to tRNA(Ile). As IleRS can inadvertently accommodate and process structurally similar amino acids such as valine, to avoid such errors it has two additional distinct tRNA(Ile)-dependent editing activities. One activity is designated as 'pretransfer' editing and involves the hydrolysis of activated Val-AMP. The other activity is designated 'posttransfer' editing and involves deacylation of mischarged Val-tRNA(Ile). This is Isoleucine--tRNA ligase from Methanosarcina mazei (strain ATCC BAA-159 / DSM 3647 / Goe1 / Go1 / JCM 11833 / OCM 88) (Methanosarcina frisia).